The following is a 486-amino-acid chain: Bile acid receptor (486 aa).

Residue Lys-132 forms a Glycyl lysine isopeptide (Lys-Gly) (interchain with G-Cter in SUMO1) linkage. Residues 134-209 (DELCVVCGDR…MGMLAECMYT (76 aa)) constitute a DNA-binding region (nuclear receptor). An NR C4-type zinc finger spans residues 137–157 (CVVCGDRASGYHYNALTCEGC). Ser-145 and Ser-164 each carry phosphoserine; by PKC/PRKCA. Lys-167 is subject to N6-acetyllysine; by EP300. An NR C4-type zinc finger spans residues 173 to 197 (CKNGGNCVMDMYMRRKCQECRLRKC). At Lys-220 the chain carries N6-methyllysine; by SETD7. An N6-acetyllysine; by EP300 modification is found at Lys-227. Positions 262 to 486 (DQQTLLHFIM…PLLCEIWDVQ (225 aa)) constitute an NR LBD domain. Lys-289 is covalently cross-linked (Glycyl lysine isopeptide (Lys-Gly) (interchain with G-Cter in SUMO1)). Residues Arg-345, Tyr-375, and Tyr-383 each coordinate chenodeoxycholate. Thr-456 is subject to Phosphothreonine; by PKC/PRKCZ. His-461 lines the chenodeoxycholate pocket.

Belongs to the nuclear hormone receptor family. NR1 subfamily. In terms of assembly, heterodimer (via C-terminus) with RXRA (via DBD); the heterodimerization enhances the binding affinity for LXXLL motifs from coactivators. Binds DNA predominantly as a heterodimer with RXRA. After activation by agonist binding interacts with coactivators. Interacts with NCOA1, NCOA2, PPARGC1A, CARM1, SETD7, PRMT1, GPS2, SMARCA4 and MED1. Interacts with EP300 and SMARCD1. Interacts with XRCC5 and XRCC6; decreasing NR1H4/FXR transactivation activity towards ABCB11/BSEP. Interacts with PAGR1 and NCOA6; indicative for an association with an MLL2/MLL3 complex (ASCOM). Acetylated by EP300. Lys-227 as is the major acetylation site for EP300; the dynamicly regulated acetylation inhibits heterodimerization with RXRA and transactivation activity. Deacetylated by SIRT1. Post-translationally, methylation may increase transactivation of target genes. In terms of processing, phosphorylation by PKC/PRKCA increases transactivation activity by promoting association with PPARGC1A. Sumoylated upon ligand binding. Liver and hepatocyte-related cells express mainly FXRalpha1-type isoforms with isoform 3 and isoform 4 in approximately equal proportions. In intestine and kidney mainly FXRalpha2-type isoforms are expressed with isoform 1 and isoform 2 in approximately equal proportions. Expressed in pancreatic beta cells and macrophages.

Its subcellular location is the nucleus. Functionally, ligand-activated transcription factor. Receptor for bile acids (BAs) such as chenodeoxycholic acid (CDCA), lithocholic acid, deoxycholic acid (DCA) and allocholic acid (ACA). Plays a essential role in BA homeostasis through the regulation of genes involved in BA synthesis, conjugation and enterohepatic circulation. Also regulates lipid and glucose homeostasis and is involved innate immune response. The FXR-RXR heterodimer binds predominantly to farnesoid X receptor response elements (FXREs) containing two inverted repeats of the consensus sequence 5'-AGGTCA-3' in which the monomers are spaced by 1 nucleotide (IR-1) but also to tandem repeat DR1 sites with lower affinity, and can be activated by either FXR or RXR-specific ligands. It is proposed that monomeric nuclear receptors such as NR5A2/LRH-1 bound to coregulatory nuclear responsive element (NRE) halfsites located in close proximity to FXREs modulate transcriptional activity. In the liver activates transcription of the corepressor NR0B2 thereby indirectly inhibiting CYP7A1 and CYP8B1 (involved in BA synthesis) implicating at least in part histone demethylase KDM1A resulting in epigenomic repression, and SLC10A1/NTCP (involved in hepatic uptake of conjugated BAs). Activates transcription of the repressor MAFG (involved in regulation of BA synthesis). Activates transcription of SLC27A5/BACS and BAAT (involved in BA conjugation), ABCB11/BSEP (involved in bile salt export) by directly recruiting histone methyltransferase CARM1, and ABCC2/MRP2 (involved in secretion of conjugated BAs) and ABCB4 (involved in secretion of phosphatidylcholine in the small intestine). Activates transcription of SLC27A5/BACS and BAAT (involved in BA conjugation), ABCB11/BSEP (involved in bile salt export) by directly recruiting histone methyltransferase CARM1, and ABCC2/MRP2 (involved in secretion of conjugated BAs) and ABCB4 (involved in secretion of phosphatidylcholine in the small intestine). In the intestine activates FGF19 expression and secretion leading to hepatic CYP7A1 repression. The function also involves the coordinated induction of hepatic KLB/beta-klotho expression. Regulates transcription of liver UGT2B4 and SULT2A1 involved in BA detoxification; binding to the UGT2B4 promoter seems to imply a monomeric transactivation independent of RXRA. Modulates lipid homeostasis by activating liver NR0B2/SHP-mediated repression of SREBF1 (involved in de novo lipogenesis), expression of PLTP (involved in HDL formation), SCARB1 (involved in HDL hepatic uptake), APOE, APOC1, APOC4, PPARA (involved in beta-oxidation of fatty acids), VLDLR and SDC1 (involved in the hepatic uptake of LDL and IDL remnants), and inhibiting expression of MTTP (involved in VLDL assembly. Increases expression of APOC2 (promoting lipoprotein lipase activity implicated in triglyceride clearance). Transrepresses APOA1 involving a monomeric competition with NR2A1 for binding to a DR1 element. Also reduces triglyceride clearance by inhibiting expression of ANGPTL3 and APOC3 (both involved in inhibition of lipoprotein lipase). Involved in glucose homeostasis by modulating hepatic gluconeogenesis through activation of NR0B2/SHP-mediated repression of respective genes. Modulates glycogen synthesis (inducing phosphorylation of glycogen synthase kinase-3). Modulates glucose-stimulated insulin secretion and is involved in insulin resistance. Involved in intestinal innate immunity. Plays a role in protecting the distal small intestine against bacterial overgrowth and preservation of the epithelial barrier. Down-regulates inflammatory cytokine expression in several types of immune cells including macrophages and mononuclear cells. Mediates trans-repression of TLR4-induced cytokine expression; the function seems to require its sumoylation and prevents N-CoR nuclear receptor corepressor clearance from target genes such as IL1B and NOS2. Involved in the TLR9-mediated protective mechanism in intestinal inflammation. Plays an anti-inflammatory role in liver inflammation; proposed to inhibit pro-inflammatory (but not antiapoptotic) NF-kappa-B signaling). Promotes transcriptional activation of target genes NR0B2/SHP (inducible by unconjugated CDCA), SLC51B/OSTB (inducible by unconjugated CDCA and DCA) and FABP6/IBAP; low activity for ABCB11/BSEP (inducible by unconjugated CDCA, DCA and ACA); not inducible by taurine- and glycine-amidated CDCA. In terms of biological role, promotes transcriptional activation of target genes ABCB11/BSEP (inducible by unconjugated CDCA, DCA and ACA), NR0B2/SHP (inducible by unconjugated CDCA DCA and ACA), SLC51B/OSTB (inducible by unconjugated CDCA and DCA) and FABP6/IBAP; not inducible by taurine- and glycine-amidated CDCA. Its function is as follows. Promotes transcriptional activation of target genes NR0B2/SHP (inducible by unconjugated CDCA), SLC51B/OSTB (inducible by unconjugated CDCA and DCA) and IBAP; low activity for ABCB11/BSEP (inducible by unconjugated CDCA, DCA and ACA); not inducible by taurine- and glycine-amidated CDCA. Functionally, promotes transcriptional activation of target genes ABCB11/BSEP (inducible by unconjugated CDCA, ACA and DCA), NR0B2/SHP (inducible by unconjugated CDCA, ACA and DCA), SLC51B/OSTB (inducible by unconjugated CDCA and DCA) and FABP6/IBAP; most efficient isoform compared to isoforms 1 to 3; not inducible by taurine- and glycine-amidated CDCA. This is Bile acid receptor (NR1H4) from Homo sapiens (Human).